The primary structure comprises 228 residues: LOB domain-containing protein 30 (228 aa).

The region spanning 16–118 (GPCGACKFLR…TELSYLQAHL (103 aa)) is the LOB domain. The tract at residues 188–228 (SNMGGGGELQALAREFIHGGQMPAQPSPGTSGSASSVIKRE) is disordered. Over residues 214–228 (SPGTSGSASSVIKRE) the composition is skewed to polar residues.

It belongs to the LOB domain-containing protein family. In terms of tissue distribution, expressed in roots, stems, leaves and flowers. Expressed in vascular tissues of hypocotyls, leaves, roots, developing floral organs and siliques.

Its function is as follows. Involved in the positive regulation of tracheary element (TE) differentiation. Involved in a positive feedback loop that maintains or promotes NAC030/VND7 expression that regulates TE differentiation-related genes. This Arabidopsis thaliana (Mouse-ear cress) protein is LOB domain-containing protein 30 (LBD30).